Here is a 209-residue protein sequence, read N- to C-terminus: C-type lectin domain family 6 member A (209 aa).

The Cytoplasmic segment spans residues 1 to 20; sequence MVQERQSQGKGVCWTLRLWS. A helical; Signal-anchor for type II membrane protein membrane pass occupies residues 21–43; sequence AAVISMLLLSTCFIASCVVTYQF. The Extracellular segment spans residues 44–209; sequence IMDQPSRRLY…SICEMKKIYL (166 aa). 4 cysteine pairs are disulfide-bonded: Cys64-Cys78, Cys79-Cys90, Cys107-Cys202, and Cys176-Cys194. Positions 86-203 constitute a C-type lectin domain; sequence FGSSCYLIST…CDSKHNSICE (118 aa). Ca(2+) is bound by residues Val116, Asn118, and Glu122. An N-linked (GlcNAc...) asparagine glycan is attached at Asn131. The Ca(2+) site is built by Glu168, Asn170, and Glu174. Alpha-D-mannopyranose-binding positions include 168 to 170, Glu174, Trp182, and 190 to 191; these read EPN and ND. Residues Asn190, Asp191, and Glu203 each contribute to the Ca(2+) site.

Associated with FCER1G. Heterodimer with CLEC4D; this heterodimer forms a pattern recognition receptor (PRR) against fungal infection. In terms of tissue distribution, expressed by the XS52 DC (dendritic cell) line (at protein level). Expressed constitutively by the epidermis, and skin resident DC appear to be the major source of this expression. Expressed in the spleen and thymus. Expression was undetectable in non-DC lines, including macrophage lines (J774 and Raw), T-cell lines (7-17, HDK-1, and D10), B-cell hybridoma (5C5), a keratinocyte line (Pam 212), and a fibroblast line (NS01).

The protein resides in the cell membrane. Calcium-dependent lectin that acts as a pattern recognition receptor (PRR) of the innate immune system: specifically recognizes and binds alpha-mannans on C.albicans hypheas. Binding of C.albicans alpha-mannans to this receptor complex leads to phosphorylation of the immunoreceptor tyrosine-based activation motif (ITAM) of FCER1G, triggering activation of SYK, CARD9 and NF-kappa-B, consequently driving maturation of antigen-presenting cells and shaping antigen-specific priming of T-cells toward effector T-helper 1 and T-helper 17 cell subtypes. Also recognizes, in a mannose-dependent manner, allergens from house dust mite and fungi, by promoting cysteinyl leukotriene production. Recognizes soluble elements from the eggs of Shistosoma mansoni altering adaptive immune responses. The protein is C-type lectin domain family 6 member A of Mus musculus (Mouse).